The primary structure comprises 204 residues: uncharacterized protein (204 aa).

Residues 63 to 83 (SLLLSMVASVTAAGGNAAIVG) traverse the membrane as a helical segment.

It localises to the membrane. This is an uncharacterized protein from Mycobacterium tuberculosis (strain ATCC 25618 / H37Rv).